Reading from the N-terminus, the 294-residue chain is Elongation factor Ts (294 aa).

Positions 81–84 (TDFV) are involved in Mg(2+) ion dislocation from EF-Tu.

The protein belongs to the EF-Ts family.

The protein resides in the cytoplasm. Functionally, associates with the EF-Tu.GDP complex and induces the exchange of GDP to GTP. It remains bound to the aminoacyl-tRNA.EF-Tu.GTP complex up to the GTP hydrolysis stage on the ribosome. In Levilactobacillus brevis (strain ATCC 367 / BCRC 12310 / CIP 105137 / JCM 1170 / LMG 11437 / NCIMB 947 / NCTC 947) (Lactobacillus brevis), this protein is Elongation factor Ts.